Reading from the N-terminus, the 90-residue chain is Small ribosomal subunit protein bS20 (90 aa).

Positions 1 to 11 (MAHHKSAKKRI) are enriched in basic residues. The interval 1-22 (MAHHKSAKKRIRQTERRTEVNR) is disordered. Residues 12-22 (RQTERRTEVNR) are compositionally biased toward basic and acidic residues.

This sequence belongs to the bacterial ribosomal protein bS20 family.

Binds directly to 16S ribosomal RNA. The polypeptide is Small ribosomal subunit protein bS20 (Paramagnetospirillum magneticum (strain ATCC 700264 / AMB-1) (Magnetospirillum magneticum)).